The chain runs to 646 residues: Exoribonuclease 2 (646 aa).

The region spanning 191–518 (RIDLTALDFV…NHRLLKAIIQ (328 aa)) is the RNB domain. The S1 motif domain occupies 563–645 (DKTFSAEIVD…ETRNIVARPV (83 aa)).

Belongs to the RNR ribonuclease family. RNase II subfamily.

It localises to the cytoplasm. It catalyses the reaction Exonucleolytic cleavage in the 3'- to 5'-direction to yield nucleoside 5'-phosphates.. Its function is as follows. Involved in mRNA degradation. Hydrolyzes single-stranded polyribonucleotides processively in the 3' to 5' direction. The protein is Exoribonuclease 2 of Xenorhabdus bovienii (strain SS-2004) (Xenorhabdus nematophila subsp. bovienii).